A 1176-amino-acid polypeptide reads, in one-letter code: MLEGRILADFRQTDASLHQGRPQSSSNSSVPGAPNRVSFAKLREPLEVPGLLDVQTDSFEWLIGSQRWRESAAQRGDATPVGGLEEVLYELSPIEDFSGSMSLSFSDPRFDEVKAPVDECKDKDMTYAAPLFVTAEFINNNTGEIKSQTVFMGDFPMMTEKGTFIINGTERVVVSQLVRSPGVYFDETIDKSTDKLLHSVKVIPSRGAWLEFDVDKRDTVGVRIDRKRRQPVTVLLKALGWSNEQIHERFGFSEIMMGTLEKDNTAGTDEALLDIYRKLRPGEPPTKESAQTLLENLFFKEKRYDLARVGRYKVNKKLGLNAGQPITSSTLTEEDVVATIEYLVRLHEGQTAMTAPGGVEVPVETDDIDHFGNRRLRTVGELIQNQIRVGMSRMERVVRERMTTQDVEAITPQTLINIRPVVAAIKEFFGTSQLSQFMDQNNPLSGLTHKRRLSALGPGGLSRERAGLEVRDVHPSHYGRMCPIETPEGPNIGLIGSLSVYARVNPFGFIETPYRKVVDGVVSDEIHYLTADEEDRHVVAQANSPIDAQGRFVEPRVLVRRKAGEVEYVPSSEVDYMDVSPRQMVSVATAMIPFLEHDDANRALMGANMQRQAVPLVRSEAPLVGTGMELRAAIDAGDVVVADKAGVIEEVSADYITVMADDGTRHTYRMRKFARSNHGTCANQSPIVDAGERVEAGQVIADGPCTQNGEMALGKNLLVAIMPWEGHNYEDAIILSNRLVEEDVLTSIHIEEHEIDARDTKLGAEEITRDIPNVSDEVLADLDERGIVRIGAEVRDGDILVGKVTPKGETELTPEERLLRAIFGEKAREVRDTSLKVPHGESGKVIGIRVFSREDDDELPAGVNELVRVYVAQKRKISDGDKLAGRHGNKGVIGKILPAEDMPFLPDGTPVDIILNTHGVPRRMNIGQILETHLGWVAKSGWNIDVANGVPEWAGKLPENLLSAQPDSIVSTPVFDGAQEAELQGLLSATLPNRDGEVLVDGDGKAKLFDGRSGEPFPYPVTVGYMYIMKLHHLVDDKIHARSTGPYSMITQQPLGGKAQFGGQRFGEMECWAMQAYGAAYTLQELLTIKSDDTVGRVKVYEAIVKGENIPEPGIPESFKVLLKELQSLCLNVEVLSSDGAAIELREGEDEDLERAAANLGINLSRNESASVEDLA.

Over residues 13 to 30 the composition is skewed to polar residues; sequence TDASLHQGRPQSSSNSSV. Positions 13 to 35 are disordered; that stretch reads TDASLHQGRPQSSSNSSVPGAPN.

It belongs to the RNA polymerase beta chain family. The RNAP catalytic core consists of 2 alpha, 1 beta, 1 beta' and 1 omega subunit. When a sigma factor is associated with the core the holoenzyme is formed, which can initiate transcription.

It catalyses the reaction RNA(n) + a ribonucleoside 5'-triphosphate = RNA(n+1) + diphosphate. Its function is as follows. DNA-dependent RNA polymerase catalyzes the transcription of DNA into RNA using the four ribonucleoside triphosphates as substrates. This chain is DNA-directed RNA polymerase subunit beta, found in Mycobacterium marinum (strain ATCC BAA-535 / M).